Here is a 429-residue protein sequence, read N- to C-terminus: Phosphoribosylamine--glycine ligase (429 aa).

The region spanning 109–316 is the ATP-grasp domain; that stretch reads KDFLARHKIP…LVELCLAACE (208 aa). 135 to 196 provides a ligand contact to ATP; the sequence is LREKGAPIVI…EEFLDGEEAS (62 aa). Positions 212–236 are disordered; it reads SQDHKRVGDKDTGPNTGGMGAYSPA. Residues 213-223 are compositionally biased toward basic and acidic residues; sequence QDHKRVGDKDT. Positions 286 and 288 each coordinate Mg(2+).

It belongs to the GARS family. In terms of assembly, monomer. Mg(2+) serves as cofactor. Mn(2+) is required as a cofactor.

It catalyses the reaction 5-phospho-beta-D-ribosylamine + glycine + ATP = N(1)-(5-phospho-beta-D-ribosyl)glycinamide + ADP + phosphate + H(+). It functions in the pathway purine metabolism; IMP biosynthesis via de novo pathway; N(1)-(5-phospho-D-ribosyl)glycinamide from 5-phospho-alpha-D-ribose 1-diphosphate: step 2/2. Catalyzes the reversible conversion of phosphoribosylamine to glycinamide ribonucleotide, an enzymatic step in purine biosynthesis pathway. This Escherichia coli (strain K12) protein is Phosphoribosylamine--glycine ligase (purD).